Here is an 81-residue protein sequence, read N- to C-terminus: Protein RALF-like 7 (81 aa).

The N-terminal stretch at Met-1–Gly-29 is a signal peptide. Cystine bridges form between Cys-46/Cys-54 and Cys-66/Cys-72.

Belongs to the plant rapid alkalinization factor (RALF) family.

It localises to the secreted. In terms of biological role, cell signaling peptide that may regulate plant stress, growth, and development. Mediates a rapid alkalinization of extracellular space by mediating a transient increase in the cytoplasmic Ca(2+) concentration leading to a calcium-dependent signaling events through a cell surface receptor and a concomitant activation of some intracellular mitogen-activated protein kinases. The protein is Protein RALF-like 7 (RALFL7) of Arabidopsis thaliana (Mouse-ear cress).